The primary structure comprises 179 residues: Large ribosomal subunit protein uL6 (179 aa).

It belongs to the universal ribosomal protein uL6 family. Part of the 50S ribosomal subunit.

Its function is as follows. This protein binds to the 23S rRNA, and is important in its secondary structure. It is located near the subunit interface in the base of the L7/L12 stalk, and near the tRNA binding site of the peptidyltransferase center. The chain is Large ribosomal subunit protein uL6 from Geobacter sulfurreducens (strain ATCC 51573 / DSM 12127 / PCA).